Reading from the N-terminus, the 160-residue chain is Serine-protein kinase RsbW (160 aa).

It belongs to the anti-sigma-factor family.

The enzyme catalyses L-seryl-[protein] + ATP = O-phospho-L-seryl-[protein] + ADP + H(+). The catalysed reaction is L-threonyl-[protein] + ATP = O-phospho-L-threonyl-[protein] + ADP + H(+). Negative regulator of sigma-B activity. Phosphorylates and inactivates its specific antagonist protein, RsbV. Upon phosphorylation of RsbV, RsbW is released and binds to sigma-B, thereby blocking its ability to form an RNA polymerase holoenzyme (E-sigma-B). The chain is Serine-protein kinase RsbW from Bacillus mycoides (strain KBAB4) (Bacillus weihenstephanensis).